We begin with the raw amino-acid sequence, 300 residues long: tRNA-cytidine(32) 2-sulfurtransferase (300 aa).

The short motif at 57-62 is the PP-loop motif element; the sequence is SGGKDS. Positions 132, 135, and 223 each coordinate [4Fe-4S] cluster.

It belongs to the TtcA family. As to quaternary structure, homodimer. Requires Mg(2+) as cofactor. [4Fe-4S] cluster is required as a cofactor.

It localises to the cytoplasm. The enzyme catalyses cytidine(32) in tRNA + S-sulfanyl-L-cysteinyl-[cysteine desulfurase] + AH2 + ATP = 2-thiocytidine(32) in tRNA + L-cysteinyl-[cysteine desulfurase] + A + AMP + diphosphate + H(+). It functions in the pathway tRNA modification. Functionally, catalyzes the ATP-dependent 2-thiolation of cytidine in position 32 of tRNA, to form 2-thiocytidine (s(2)C32). The sulfur atoms are provided by the cysteine/cysteine desulfurase (IscS) system. The chain is tRNA-cytidine(32) 2-sulfurtransferase from Xanthomonas campestris pv. campestris (strain 8004).